A 194-amino-acid chain; its full sequence is Large ribosomal subunit protein eL15 (194 aa).

Residues 162–173 (KTSAGRRARGLH) show a composition bias toward basic residues. A disordered region spans residues 162–194 (KTSAGRRARGLHNRGTGTEKCRPSLTSHKNQGK). The span at 185–194 (SLTSHKNQGK) shows a compositional bias: polar residues.

This sequence belongs to the eukaryotic ribosomal protein eL15 family.

In Methanocorpusculum labreanum (strain ATCC 43576 / DSM 4855 / Z), this protein is Large ribosomal subunit protein eL15.